We begin with the raw amino-acid sequence, 113 residues long: Flagellar hook-basal body complex protein FliE (113 aa).

Belongs to the FliE family.

It is found in the bacterial flagellum basal body. This Rhizobium etli (strain ATCC 51251 / DSM 11541 / JCM 21823 / NBRC 15573 / CFN 42) protein is Flagellar hook-basal body complex protein FliE.